A 268-amino-acid polypeptide reads, in one-letter code: DNA ligase (268 aa).

Catalysis depends on lysine 41, which acts as the N6-AMP-lysine intermediate. 3 residues coordinate ATP: phenylalanine 111, arginine 181, and lysine 187.

Belongs to the ATP-dependent DNA ligase family. It depends on a divalent metal cation as a cofactor.

It carries out the reaction ATP + (deoxyribonucleotide)n-3'-hydroxyl + 5'-phospho-(deoxyribonucleotide)m = (deoxyribonucleotide)n+m + AMP + diphosphate.. Functionally, catalyzes efficient strand joining on a single nicked DNA. This chain is DNA ligase (ligA), found in Haemophilus influenzae (strain ATCC 51907 / DSM 11121 / KW20 / Rd).